Here is a 1683-residue protein sequence, read N- to C-terminus: E3 ubiquitin-protein ligase SHPRH (1683 aa).

The disordered stretch occupies residues Met1–Pro43. Residues Arg12–Glu32 are compositionally biased toward basic and acidic residues. Phosphoserine is present on Ser266. A Helicase ATP-binding; first part domain is found at Tyr307–Thr389. ATP is bound at residue Asp373–Thr380. The 75-residue stretch at Gln438–Lys512 folds into the H15 domain. Residues Lys525–Ser607 are disordered. The segment covering Ile534–Asp547 has biased composition (basic and acidic residues). The span at Lys568–Lys588 shows a compositional bias: basic residues. Position 635 is a phosphoserine (Ser635). The segment at Arg658–Ala709 adopts a PHD-type zinc-finger fold. Positions Met710–Glu868 constitute a Helicase ATP-binding; second part domain. The DEAQ box motif lies at Asp819–Gln822. The RING-type zinc-finger motif lies at Cys1432–Arg1479. One can recognise a Helicase C-terminal domain in the interval Ala1514–Ala1672.

This sequence belongs to the SNF2/RAD54 helicase family. Homodimer. Interacts with HLTF, PCNA, UBE2N and RAD18. In terms of tissue distribution, broadly expressed.

It catalyses the reaction S-ubiquitinyl-[E2 ubiquitin-conjugating enzyme]-L-cysteine + [acceptor protein]-L-lysine = [E2 ubiquitin-conjugating enzyme]-L-cysteine + N(6)-ubiquitinyl-[acceptor protein]-L-lysine.. Its pathway is protein modification; protein ubiquitination. In terms of biological role, E3 ubiquitin-protein ligase involved in DNA repair. Upon genotoxic stress, accepts ubiquitin from the UBE2N-UBE2V2 E2 complex and transfers it to 'Lys-164' of PCNA which had been monoubiquitinated by UBE2A/B-RAD18, promoting the formation of non-canonical poly-ubiquitin chains linked through 'Lys-63'. This chain is E3 ubiquitin-protein ligase SHPRH (SHPRH), found in Homo sapiens (Human).